The primary structure comprises 298 residues: GTP cyclohydrolase FolE2 (298 aa).

The protein belongs to the GTP cyclohydrolase IV family.

The enzyme catalyses GTP + H2O = 7,8-dihydroneopterin 3'-triphosphate + formate + H(+). It functions in the pathway cofactor biosynthesis; 7,8-dihydroneopterin triphosphate biosynthesis; 7,8-dihydroneopterin triphosphate from GTP: step 1/1. Its function is as follows. Converts GTP to 7,8-dihydroneopterin triphosphate. This Pseudomonas paraeruginosa (strain DSM 24068 / PA7) (Pseudomonas aeruginosa (strain PA7)) protein is GTP cyclohydrolase FolE2.